The chain runs to 274 residues: Putative pyruvate, phosphate dikinase regulatory protein (274 aa).

Glycine 153–threonine 160 contacts ADP.

Belongs to the pyruvate, phosphate/water dikinase regulatory protein family. PDRP subfamily.

It carries out the reaction N(tele)-phospho-L-histidyl/L-threonyl-[pyruvate, phosphate dikinase] + ADP = N(tele)-phospho-L-histidyl/O-phospho-L-threonyl-[pyruvate, phosphate dikinase] + AMP + H(+). It catalyses the reaction N(tele)-phospho-L-histidyl/O-phospho-L-threonyl-[pyruvate, phosphate dikinase] + phosphate + H(+) = N(tele)-phospho-L-histidyl/L-threonyl-[pyruvate, phosphate dikinase] + diphosphate. In terms of biological role, bifunctional serine/threonine kinase and phosphorylase involved in the regulation of the pyruvate, phosphate dikinase (PPDK) by catalyzing its phosphorylation/dephosphorylation. In Bartonella tribocorum (strain CIP 105476 / IBS 506), this protein is Putative pyruvate, phosphate dikinase regulatory protein.